The chain runs to 247 residues: OCIA domain-containing protein 1 (247 aa).

In terms of domain architecture, OCIA spans 1–112 (MNGRADFREP…KKLENSPLGE (112 aa)). 3 positions are modified to phosphoserine: Ser-108, Ser-116, and Ser-123. 2 disordered regions span residues 113–153 (ALRS…ADNI) and 167–230 (SASM…MQER). Composition is skewed to polar residues over residues 136-146 (SNVSGQSSFGT) and 168-177 (ASMNESTPTG). 2 stretches are compositionally biased toward basic and acidic residues: residues 192–210 (ESPKRKGVTYEELRSKNRE) and 218–230 (HKTDPSVRPMQER). Ser-193 carries the phosphoserine modification.

This sequence belongs to the OCIAD1 family. In terms of assembly, interacts with OCIAD2. Interacts with STAT3. Expressed at high levels in the brain and at lower levels in the heart, ovary, testis and kidney. Expression is strongest in embryonic stem cells and in the blood vessels.

It localises to the endosome. Its function is as follows. Maintains stem cell potency. Increases STAT3 phosphorylation and controls ERK phosphorylation. May act as a scaffold, increasing STAT3 recruitment onto endosomes. In Mus musculus (Mouse), this protein is OCIA domain-containing protein 1.